A 935-amino-acid chain; its full sequence is Probable mediator of RNA polymerase II transcription subunit 15c (935 aa).

A compositionally biased stretch (polar residues) spans 1–13; the sequence is MEGNTNWKPNEQG. Disordered regions lie at residues 1–28, 170–190, 495–526, 548–611, and 635–654; these read MEGNTNWKPNEQGGNRDAANNRIDWRSQ, NLPTSRPNNRDQQGAFQVSSS, SSVQSLQKQKRFHHRQMQQQQPQQGNHQHQMQ, QQVS…PVPG, and SSSKLGTQETPLLFVPPPEP. Residues 511–526 are compositionally biased toward low complexity; that stretch reads MQQQQPQQGNHQHQMQ. Polar residues-rich tracts occupy residues 548 to 577 and 635 to 644; these read QQVSSSQRQVPKQESNVSSSQIQNHSSPQL and SSSKLGTQET.

Belongs to the plant Mediator complex subunit 15 family. Component of the Mediator complex.

The protein localises to the nucleus. Its function is as follows. Component of the Mediator complex, a coactivator involved in the regulated transcription of nearly all RNA polymerase II-dependent genes. Mediator functions as a bridge to convey information from gene-specific regulatory proteins to the basal RNA polymerase II transcription machinery. The Mediator complex, having a compact conformation in its free form, is recruited to promoters by direct interactions with regulatory proteins and serves for the assembly of a functional preinitiation complex with RNA polymerase II and the general transcription factors. This is Probable mediator of RNA polymerase II transcription subunit 15c (MED15C) from Arabidopsis thaliana (Mouse-ear cress).